A 296-amino-acid chain; its full sequence is GTPase Era (296 aa).

Positions 7 to 174 (KCSMSAIVGA…VDYLCETSPY (168 aa)) constitute an Era-type G domain. The segment at 15 to 22 (GATNAGKS) is G1. Residue 15 to 22 (GATNAGKS) coordinates GTP. The interval 41 to 45 (QTTRV) is G2. Positions 62-65 (DTPG) are G3. GTP contacts are provided by residues 62-66 (DTPGI) and 124-127 (NKID). Residues 124-127 (NKID) are G4. Residues 153-155 (ISA) are G5. Residues 205–282 (LRHELPYSLS…HLFLFVKVRE (78 aa)) form the KH type-2 domain.

Belongs to the TRAFAC class TrmE-Era-EngA-EngB-Septin-like GTPase superfamily. Era GTPase family. In terms of assembly, monomer.

It is found in the cytoplasm. It localises to the cell inner membrane. In terms of biological role, an essential GTPase that binds both GDP and GTP, with rapid nucleotide exchange. Plays a role in 16S rRNA processing and 30S ribosomal subunit biogenesis and possibly also in cell cycle regulation and energy metabolism. The polypeptide is GTPase Era (Ehrlichia ruminantium (strain Welgevonden)).